Here is a 134-residue protein sequence, read N- to C-terminus: Small ribosomal subunit protein uS12 (134 aa).

A 3-methylthioaspartic acid modification is found at Asp89. Residues 109–134 are disordered; sequence KRNVSRSKYGAKKGKAGAAPTTGKKK. A compositionally biased stretch (basic residues) spans 111 to 123; the sequence is NVSRSKYGAKKGK. The span at 124–134 shows a compositional bias: low complexity; it reads AGAAPTTGKKK.

Belongs to the universal ribosomal protein uS12 family. As to quaternary structure, part of the 30S ribosomal subunit. Contacts proteins S8 and S17. May interact with IF1 in the 30S initiation complex.

Functionally, with S4 and S5 plays an important role in translational accuracy. Its function is as follows. Interacts with and stabilizes bases of the 16S rRNA that are involved in tRNA selection in the A site and with the mRNA backbone. Located at the interface of the 30S and 50S subunits, it traverses the body of the 30S subunit contacting proteins on the other side and probably holding the rRNA structure together. The combined cluster of proteins S8, S12 and S17 appears to hold together the shoulder and platform of the 30S subunit. The protein is Small ribosomal subunit protein uS12 of Wolinella succinogenes (strain ATCC 29543 / DSM 1740 / CCUG 13145 / JCM 31913 / LMG 7466 / NCTC 11488 / FDC 602W) (Vibrio succinogenes).